Reading from the N-terminus, the 64-residue chain is Insect toxin OsI1 (64 aa).

An LCN-type CS-alpha/beta domain is found at Asp1–Gly61. 4 cysteine pairs are disulfide-bonded: Cys10-Cys60, Cys14-Cys35, Cys21-Cys42, and Cys25-Cys44. Residue Gly61 is modified to Glycine amide.

It belongs to the long (4 C-C) scorpion toxin superfamily. Sodium channel inhibitor family. Beta subfamily. In terms of tissue distribution, expressed by the venom gland.

Its subcellular location is the secreted. Functionally, depressant insect beta-toxins cause a transient contraction paralysis followed by a slow flaccid paralysis. They bind voltage-independently at site-4 of sodium channels (Nav) and shift the voltage of activation toward more negative potentials thereby affecting sodium channel activation and promoting spontaneous and repetitive firing. This toxin is active only on insects. This Orthochirus scrobiculosus (Central Asian scorpion) protein is Insect toxin OsI1.